Reading from the N-terminus, the 112-residue chain is Larval cuticle protein 4 (112 aa).

A signal peptide spans 1–16 (MFKILLVCALVALVAA). The 62-residue stretch at 31 to 92 (ADGFVSKLVL…PQSDLLPTPP (62 aa)) folds into the Chitin-binding type R&amp;R domain.

In terms of biological role, component of the larval cuticle. This Drosophila melanogaster (Fruit fly) protein is Larval cuticle protein 4 (Lcp4).